A 106-amino-acid chain; its full sequence is ATP-dependent Clp protease adapter protein ClpS (106 aa).

A disordered region spans residues 1-20; the sequence is MKVDMSTSVKDDAQLEASRV.

Belongs to the ClpS family. Binds to the N-terminal domain of the chaperone ClpA.

In terms of biological role, involved in the modulation of the specificity of the ClpAP-mediated ATP-dependent protein degradation. The protein is ATP-dependent Clp protease adapter protein ClpS of Chromobacterium violaceum (strain ATCC 12472 / DSM 30191 / JCM 1249 / CCUG 213 / NBRC 12614 / NCIMB 9131 / NCTC 9757 / MK).